A 2463-amino-acid chain; its full sequence is Protein TIC 214 (2463 aa).

6 helical membrane-spanning segments follow: residues 18–38, 60–80, 86–106, 127–147, 170–190, and 297–317; these read VGLYYGFISAFSIGSSYLFLL, FFTGQLLIFISILYGPLHLAL, ILLLLAPYFFFHYLFSNSGQW, LVFLNNLLFQLFSLSLLGRPM, FVGWLIGHILVLKWAGLVFVW, and LFSIILFAIFLLYLDQTPLLY. A coiled-coil region spans residues 326-441; that stretch reads QLQRKLSNET…AARAMQEAYK (116 aa). Disordered regions lie at residues 792 to 841, 1230 to 1249, 1393 to 1417, 2116 to 2136, and 2162 to 2187; these read AVPK…RKVN, SIQKDPKKEKDPKKEKGPKK, SGGRETPEFTRSQKDIDNLKNEQDF, EEEKIEKEKRKKERKKEKLKK, and KQRAKNIARMEEEDKKARKKRKRKVQ. Positions 794–830 are enriched in basic residues; the sequence is PKKKKKISKSKQKNVKSKQKNVKSKQKNVKSKQKNVK. Composition is skewed to basic and acidic residues over residues 832-841, 1231-1249, and 1397-1417; these read KQNEIKRKVN, IQKDPKKEKDPKKEKGPKK, and ETPEFTRSQKDIDNLKNEQDF. The stretch at 2049–2192 forms a coiled coil; that stretch reads WDALVASLKQ…KRKVQVQENK (144 aa). Positions 2124 to 2136 are enriched in basic residues; it reads KRKKERKKEKLKK.

This sequence belongs to the TIC214 family. As to quaternary structure, part of the Tic complex.

Its subcellular location is the plastid. It localises to the chloroplast inner membrane. Involved in protein precursor import into chloroplasts. May be part of an intermediate translocation complex acting as a protein-conducting channel at the inner envelope. This is Protein TIC 214 from Oenothera elata subsp. hookeri (Hooker's evening primrose).